Consider the following 713-residue polypeptide: Endopolyphosphatase (713 aa).

Residues 1-19 (MSVLIDEKSHRSSGSTRSR) are Cytoplasmic-facing. Residues 20–40 (IVVTVVGVLLMVSGLAVMLGH) traverse the membrane as a helical; Signal-anchor for type II membrane protein segment. Over 41-713 (QSGSANEALG…SSEYENMGMG (673 aa)) the chain is Vacuolar. The span at 399-418 (SDDDDNSDSDSDDDDEDTSL) shows a compositional bias: acidic residues. The disordered stretch occupies residues 399–430 (SDDDDNSDSDSDDDDEDTSLEESYSNFNSPIL). Residues Asn507 and Asn645 are each glycosylated (N-linked (GlcNAc...) asparagine). Positions 640 to 659 (VKEKKNKSNKKSKKKKKNKD) are enriched in basic residues. The tract at residues 640–684 (VKEKKNKSNKKSKKKKKNKDKRLLENSEPLKQDGSKDSRLEQDRV) is disordered. Over residues 660 to 683 (KRLLENSEPLKQDGSKDSRLEQDR) the composition is skewed to basic and acidic residues.

It belongs to the endopolyphosphatase PPN1 family. A divalent metal cation serves as cofactor. Processing by proteases in the vacuole may be required for activation.

The protein resides in the vacuole membrane. It catalyses the reaction [phosphate](n+1) + n H2O = (n+1) phosphate + n H(+). Its function is as follows. Catalyzes the hydrolysis of inorganic polyphosphate (polyP) chains of many hundreds of phosphate residues into shorter lengths. This Debaryomyces hansenii (strain ATCC 36239 / CBS 767 / BCRC 21394 / JCM 1990 / NBRC 0083 / IGC 2968) (Yeast) protein is Endopolyphosphatase (PPN1).